The chain runs to 246 residues: 1-(5-phosphoribosyl)-5-[(5-phosphoribosylamino)methylideneamino] imidazole-4-carboxamide isomerase (246 aa).

The Proton acceptor role is filled by Asp8. The active-site Proton donor is the Asp131.

It belongs to the HisA/HisF family.

It localises to the cytoplasm. It catalyses the reaction 1-(5-phospho-beta-D-ribosyl)-5-[(5-phospho-beta-D-ribosylamino)methylideneamino]imidazole-4-carboxamide = 5-[(5-phospho-1-deoxy-D-ribulos-1-ylimino)methylamino]-1-(5-phospho-beta-D-ribosyl)imidazole-4-carboxamide. It participates in amino-acid biosynthesis; L-histidine biosynthesis; L-histidine from 5-phospho-alpha-D-ribose 1-diphosphate: step 4/9. The polypeptide is 1-(5-phosphoribosyl)-5-[(5-phosphoribosylamino)methylideneamino] imidazole-4-carboxamide isomerase (Bordetella bronchiseptica (strain ATCC BAA-588 / NCTC 13252 / RB50) (Alcaligenes bronchisepticus)).